Consider the following 483-residue polypeptide: Probable 4-hydroxyphenylacetate 3-monooxygenase (483 aa).

Residues 104–108 and His150 each bind substrate; that span reads RSPDY. FAD-binding positions include 150–152, 156–159, and Thr193; these read HTF and QVNR. 206–207 serves as a coordination point for substrate; sequence AP. An FAD-binding site is contributed by 452–455; the sequence is DPIR.

It belongs to the FADH(2)-utilizing monooxygenase family.

It carries out the reaction 4-hydroxyphenylacetate + FADH2 + O2 = 3,4-dihydroxyphenylacetate + FAD + H2O + H(+). It participates in aromatic compound metabolism; 4-hydroxyphenylacetate degradation; pyruvate and succinate semialdehyde from 4-hydroxyphenylacetate: step 1/7. Its function is as follows. Catalyzes the hydroxylation of 4-hydroxyphenylacetic acid (4HPA), leading to the production of 3,4-dihydroxyphenylacetic acid (DHPA). This chain is Probable 4-hydroxyphenylacetate 3-monooxygenase (yoaI), found in Bacillus subtilis (strain 168).